A 232-amino-acid chain; its full sequence is 7-cyano-7-deazaguanine synthase (232 aa).

13 to 23 (LSGGLDSATVL) serves as a coordination point for ATP. The Zn(2+) site is built by C194, C204, C207, and C210.

This sequence belongs to the QueC family. It depends on Zn(2+) as a cofactor.

It catalyses the reaction 7-carboxy-7-deazaguanine + NH4(+) + ATP = 7-cyano-7-deazaguanine + ADP + phosphate + H2O + H(+). Its pathway is purine metabolism; 7-cyano-7-deazaguanine biosynthesis. Its function is as follows. Catalyzes the ATP-dependent conversion of 7-carboxy-7-deazaguanine (CDG) to 7-cyano-7-deazaguanine (preQ(0)). The protein is 7-cyano-7-deazaguanine synthase of Hydrogenovibrio crunogenus (strain DSM 25203 / XCL-2) (Thiomicrospira crunogena).